The primary structure comprises 627 residues: Pro-interleukin-16 (627 aa).

3 disordered regions span residues 34 to 136 (HMPL…SIKQ), 162 to 267 (SSGE…LTRS), and 316 to 337 (GASP…ETSG). Position 217 is a phosphoserine (Ser-217). Polar residues predominate over residues 318-337 (SPTSLSNEDSAANGCAETSG). The tract at residues 401-497 (KQLDSIHVTI…IVTRKLTPET (97 aa)) is interaction with PPP1R12A, PPP1R12B and PPP1R12C. PDZ domains are found at residues 407–492 (HVTI…VTRK) and 529–614 (TVTL…IKRK).

In terms of assembly, homotetramer. Pro-interleukin-16 interacts (via PDZ 2 domain) with PPP1R12A, PPP1R12B and PPP1R12C. Pro-interleukin-16 interacts with GRIN2A. Pro-interleukin-16 interacts with GABPB1. Pro-interleukin-16 interacts (via PDZ 3 domain) with HDAC3.

The protein localises to the secreted. It is found in the cytoplasm. The protein resides in the nucleus. Its function is as follows. Interleukin-16 stimulates a migratory response in CD4+ lymphocytes, monocytes, and eosinophils. Primes CD4+ T-cells for IL-2 and IL-15 responsiveness. Also induces T-lymphocyte expression of interleukin 2 receptor. Ligand for CD4. Pro-interleukin-16 is involved in cell cycle progression in T-cells. Appears to be involved in transcriptional regulation of SKP2 and is probably part of a transcriptional repression complex on the core promoter of the SKP2 gene. May act as a scaffold for GABPB1 (the DNA-binding subunit the GABP transcription factor complex) and HDAC3 thus maintaining transcriptional repression and blocking cell cycle progression in resting T-cells. This Saimiri sciureus (Common squirrel monkey) protein is Pro-interleukin-16 (IL16).